The primary structure comprises 957 residues: ERC protein 2 (957 aa).

Over residues 1 to 13 (MYGSARTITNLEG) the composition is skewed to polar residues. A disordered region spans residues 1-44 (MYGSARTITNLEGSPSRSPRLPRSPRLGHRRTSSGGGGGTGKTL). Over residues 14–25 (SPSRSPRLPRSP) the composition is skewed to low complexity. Phosphoserine is present on residues serine 65 and serine 666. A coiled-coil region spans residues 140 to 917 (RQVRDSTMLD…RMKLMADNYD (778 aa)). A disordered region spans residues 918 to 957 (DDHHHYHHHHHHHHHRSPGRSQHSNHRPSPDQDDEEGIWA). Residues 922–943 (HYHHHHHHHHHRSPGRSQHSNH) are compositionally biased toward basic residues. Positions 948-957 (DQDDEEGIWA) are enriched in acidic residues.

In terms of assembly, interacts with BSN, ERC1, PPFIA1, PPFIA2, PPFIA3 and PPFIA4. Interacts through its C-terminus with the PDZ domain of RIMS1. Part of a complex consisting of ERC2, RIMS1 and UNC13A.

The protein localises to the cytoplasm. It is found in the synapse. Its subcellular location is the presynaptic active zone. It localises to the cytoskeleton. Thought to be involved in the organization of the cytomatrix at the nerve terminals active zone (CAZ) which regulates neurotransmitter release. Seems to act together with BSN. May recruit liprin-alpha proteins to the CAZ. In Homo sapiens (Human), this protein is ERC protein 2 (ERC2).